The primary structure comprises 537 residues: Endoprotease aex-5 (537 aa).

Positions 1-17 are cleaved as a signal peptide; it reads MKLIFLLLLFGVSPIVC. A propeptide spanning residues 18-99 is cleaved from the precursor; the sequence is QDFEDGVFLA…KLQGFRRYKR (82 aa). In terms of domain architecture, Peptidase S8 spans 111 to 413; the sequence is VWNLTPSLYI…FGLLNAQKLV (303 aa). Residue N129 is glycosylated (N-linked (GlcNAc...) asparagine). Catalysis depends on charge relay system residues D139 and H178. Cysteines 286 and 316 form a disulfide. S346 functions as the Charge relay system in the catalytic mechanism. N380 is a glycosylation site (N-linked (GlcNAc...) asparagine). The region spanning 407-537 is the P/Homo B domain; sequence LNAQKLVVMA…KMFKVVGTMS (131 aa).

Belongs to the peptidase S8 family. Furin subfamily.

It localises to the secreted. Its function is as follows. Probable serine endoprotease which cleaves preproteins at paired basic amino acids. May process FMRFamide-like (flp) and neuropeptide-like protein (nlp) neuropeptides. In muscles, involved in neuronal retrograde signaling by regulating presynaptic activity and localization of synaptic vesicle fusion protein unc-13 at the neuromuscular junction (NMJ). Acts in the intestine to regulate anterior body muscle contractions (aBOC) and the expulsion steps during the defecation motor program (DMP). Probably by regulating DMP, required for fatty acid uptake by intestinal cells and therefore regulates the levels of triglycerides in the intestine. Plays a role in locomotion. The sequence is that of Endoprotease aex-5 from Caenorhabditis elegans.